The sequence spans 294 residues: Oligopeptide transport system permease protein OppC (294 aa).

6 helical membrane-spanning segments follow: residues 27–47 (MIST…SMFL), 94–114 (IAFA…VITG), 127–147 (FTDF…VTII), 151–171 (NSWS…TRLI), 202–224 (IWPN…NIGL), and 260–280 (WTWV…IFIG). Positions 88-280 (ARNSFNIAFA…IVVLAIIFIG (193 aa)) constitute an ABC transmembrane type-1 domain.

It belongs to the binding-protein-dependent transport system permease family. OppBC subfamily. As to quaternary structure, the complex is composed of two ATP-binding proteins (OppD and OppF), two transmembrane proteins (OppB and OppC) and a solute-binding protein (OppA).

The protein localises to the cell membrane. Its function is as follows. Part of the ABC transporter complex OppABCDF involved in the uptake of oligopeptides. Probably responsible for the translocation of the substrate across the membrane. This is Oligopeptide transport system permease protein OppC from Lactococcus lactis subsp. cremoris (strain SK11).